We begin with the raw amino-acid sequence, 251 residues long: Mast cell protease 3 (251 aa).

The signal sequence occupies residues 1–17 (MVLFLLLVALLSPAGEA). The propeptide at 18 to 19 (GK) is activation peptide. Residues 20–243 (IIGGHEAKPH…FLSWIQRTMR (224 aa)) enclose the Peptidase S1 domain. Residues Cys-48 and Cys-64 are joined by a disulfide bond. His-63 serves as the catalytic Charge relay system. An N-linked (GlcNAc...) asparagine glycan is attached at Asn-70. Asp-107 serves as the catalytic Charge relay system. 2 disulfides stabilise this stretch: Cys-141-Cys-207 and Cys-172-Cys-186. Ser-201 functions as the Charge relay system in the catalytic mechanism.

This sequence belongs to the peptidase S1 family. Granzyme subfamily.

The protein resides in the secreted. The protein localises to the cytoplasmic granule. The protein is Mast cell protease 3 of Ovis aries (Sheep).